Here is a 245-residue protein sequence, read N- to C-terminus: Malonyl-[acyl-carrier protein] O-methyltransferase (245 aa).

This sequence belongs to the methyltransferase superfamily.

It carries out the reaction malonyl-[ACP] + S-adenosyl-L-methionine = malonyl-[ACP] methyl ester + S-adenosyl-L-homocysteine. It functions in the pathway cofactor biosynthesis; biotin biosynthesis. In terms of biological role, converts the free carboxyl group of a malonyl-thioester to its methyl ester by transfer of a methyl group from S-adenosyl-L-methionine (SAM). It allows to synthesize pimeloyl-ACP via the fatty acid synthetic pathway. The sequence is that of Malonyl-[acyl-carrier protein] O-methyltransferase from Calditerrivibrio nitroreducens (strain DSM 19672 / NBRC 101217 / Yu37-1).